A 49-amino-acid polypeptide reads, in one-letter code: uncharacterized protein (49 aa).

A helical transmembrane segment spans residues 20–42; sequence LFLVGLTIGKMATSRILSFLGFI.

The protein resides in the membrane. This is an uncharacterized protein from Dictyostelium discoideum (Social amoeba).